A 340-amino-acid chain; its full sequence is Putative UPF0607 protein ENSP00000332738 (340 aa).

The segment covering 75 to 90 has biased composition (basic and acidic residues); sequence VRAEEPKEATEVKDQV. Disordered stretches follow at residues 75 to 130 and 215 to 281; these read VRAE…NPRP and GLLM…KLPC. Over residues 91 to 126 the composition is skewed to polar residues; the sequence is ETQGQEDNKTGPCSNGKAASTSRPLETQGNLTSSWY. The span at 228–241 shows a compositional bias: low complexity; it reads PAALRSSRSSPPRA. The span at 242–251 shows a compositional bias: basic residues; the sequence is AGHRPRKRKL. The span at 254–266 shows a compositional bias: low complexity; it reads PPLQLQQTPPLQL.

This sequence belongs to the UPF0607 family.

This chain is Putative UPF0607 protein ENSP00000332738, found in Homo sapiens (Human).